Here is a 274-residue protein sequence, read N- to C-terminus: Cytochrome b-c1 complex subunit Rieske, mitochondrial (274 aa).

Residues 79-103 (SHTDVKVPDFCDYRRPEVLDSTKSS) are Mitochondrial matrix-facing. Residues 104–140 (RESSEARKSFSYMVTAVTTVGVAYAAKNAVTQFVSSM) form a helical membrane-spanning segment. Residues 141-274 (SASADVLAMA…FTSDDMVVVG (134 aa)) are Mitochondrial intermembrane-facing. The 86-residue stretch at 187 to 272 (EAAVELSQLR…YEFTSDDMVV (86 aa)) folds into the Rieske domain. Cysteine 217, histidine 219, cysteine 236, histidine 239, and serine 241 together coordinate [2Fe-2S] cluster. A disulfide bridge links cysteine 222 with cysteine 238.

The protein belongs to the Rieske iron-sulfur protein family. In terms of assembly, component of the ubiquinol-cytochrome c oxidoreductase (cytochrome b-c1 complex, complex III, CIII), a multisubunit enzyme composed of 11 subunits. The complex is composed of 3 respiratory subunits cytochrome b, cytochrome c1 and Rieske protein UQCRFS1, 2 core protein subunits UQCRC1/QCR1 and UQCRC2/QCR2, and 6 low-molecular weight protein subunits UQCRH/QCR6, UQCRB/QCR7, UQCRQ/QCR8, UQCR10/QCR9, UQCR11/QCR10 and subunit 9, the cleavage product of Rieske protein UQCRFS1. The complex exists as an obligatory dimer and forms supercomplexes (SCs) in the inner mitochondrial membrane with NADH-ubiquinone oxidoreductase (complex I, CI) and cytochrome c oxidase (complex IV, CIV), resulting in different assemblies (supercomplex SCI(1)III(2)IV(1) and megacomplex MCI(2)III(2)IV(2)). Incorporation of the Rieske protein UQCRFS1 is the penultimate step in complex III assembly. Interacts with TTC19, which is involved in the clearance of UQCRFS1 fragments. Component of the ubiquinol-cytochrome c oxidoreductase (cytochrome b-c1 complex, complex III, CIII). Subunit 9 corresponds to the mitochondrial targeting sequence (MTS) of Rieske protein UQCRFS1. It is retained after processing and incorporated inside complex III, where it remains bound to the complex and localizes between the 2 core subunits UQCRC1/QCR1 and UQCRC2/QCR2. The cofactor is [2Fe-2S] cluster. Post-translationally, proteolytic processing is necessary for the correct insertion of UQCRFS1 in the complex III dimer. Several fragments are generated during UQCRFS1 insertion, most probably due to the endogenous matrix-processing peptidase (MPP) activity of the 2 core protein subunits UQCRC1/QCR1 and UQCRC2/QCR2, which are homologous to the 2 mitochondrial-processing peptidase (MPP) subunits beta-MPP and alpha-MPP respectively. The action of the protease is also necessary for the clearance of the UQCRFS1 fragments.

Its subcellular location is the mitochondrion inner membrane. The catalysed reaction is a quinol + 2 Fe(III)-[cytochrome c](out) = a quinone + 2 Fe(II)-[cytochrome c](out) + 2 H(+)(out). Component of the ubiquinol-cytochrome c oxidoreductase, a multisubunit transmembrane complex that is part of the mitochondrial electron transport chain which drives oxidative phosphorylation. The respiratory chain contains 3 multisubunit complexes succinate dehydrogenase (complex II, CII), ubiquinol-cytochrome c oxidoreductase (cytochrome b-c1 complex, complex III, CIII) and cytochrome c oxidase (complex IV, CIV), that cooperate to transfer electrons derived from NADH and succinate to molecular oxygen, creating an electrochemical gradient over the inner membrane that drives transmembrane transport and the ATP synthase. The cytochrome b-c1 complex catalyzes electron transfer from ubiquinol to cytochrome c, linking this redox reaction to translocation of protons across the mitochondrial inner membrane, with protons being carried across the membrane as hydrogens on the quinol. In the process called Q cycle, 2 protons are consumed from the matrix, 4 protons are released into the intermembrane space and 2 electrons are passed to cytochrome c. The Rieske protein is a catalytic core subunit containing a [2Fe-2S] iron-sulfur cluster. It cycles between 2 conformational states during catalysis to transfer electrons from the quinol bound in the Q(0) site in cytochrome b to cytochrome c1. Incorporation of UQCRFS1 is the penultimate step in complex III assembly. Functionally, component of the ubiquinol-cytochrome c oxidoreductase (cytochrome b-c1 complex, complex III, CIII). UQCRFS1 undergoes proteolytic processing once it is incorporated in the complex III dimer. One of the fragments, called subunit 9, corresponds to its mitochondrial targeting sequence (MTS). The proteolytic processing is necessary for the correct insertion of UQCRFS1 in the complex III dimer, but the persistence of UQCRFS1-derived fragments may prevent newly imported UQCRFS1 to be processed and assembled into complex III and is detrimental for the complex III structure and function. The sequence is that of Cytochrome b-c1 complex subunit Rieske, mitochondrial (UQCRFS1) from Colobus polykomos (Western black-and-white colobus monkey).